The sequence spans 319 residues: V-set and transmembrane domain-containing protein 4 (319 aa).

Residues 1-23 form the signal peptide; the sequence is MRLRLLALAAAVLLGPAPEVCGA. The Ig-like domain maps to 24–154; the sequence is LNVTVSPGPV…SSATEMRVIS (131 aa). N-linked (GlcNAc...) asparagine glycans are attached at residues Asn-25 and Asn-41. Cys-46 and Cys-126 are joined by a disulfide. An N-linked (GlcNAc...) asparagine glycan is attached at Asn-143. The chain crosses the membrane as a helical span at residues 180–200; the sequence is AVLVCCVGILSVLLFTLVIAW.

Proteolytically cleaved to generate a bioactive peptide. As to expression, peptide Lv is widely expressed in various tissues and the central nervous system, including the retinal photoreceptor layer, hippocampus, olfactory bulb, and cerebellum.

It is found in the cell membrane. Its subcellular location is the secreted. Functionally, peptide Lv enhances L-type voltage-gated calcium channel (L-VGCC) currents in retinal photoreceptors. This chain is V-set and transmembrane domain-containing protein 4 (Vstm4), found in Mus musculus (Mouse).